A 191-amino-acid chain; its full sequence is Ubiquinol-cytochrome c reductase iron-sulfur subunit (191 aa).

The chain crosses the membrane as a helical span at residues Ala-18–Ile-35. Residues Arg-94–Lys-189 form the Rieske domain. A disordered region spans residues Asp-95–Pro-116. Residues Cys-133, His-135, Cys-153, and His-156 each coordinate [2Fe-2S] cluster. Cysteines 138 and 155 form a disulfide.

Belongs to the Rieske iron-sulfur protein family. The main subunits of complex b-c1 are: cytochrome b, cytochrome c1 and the Rieske protein. [2Fe-2S] cluster is required as a cofactor.

It is found in the cell membrane. The catalysed reaction is a quinol + 2 Fe(III)-[cytochrome c](out) = a quinone + 2 Fe(II)-[cytochrome c](out) + 2 H(+)(out). Its function is as follows. Component of the ubiquinol-cytochrome c reductase complex (complex III or cytochrome b-c1 complex), which is a respiratory chain that generates an electrochemical potential coupled to ATP synthesis. This is Ubiquinol-cytochrome c reductase iron-sulfur subunit (petA) from Rhodobacter capsulatus (strain ATCC BAA-309 / NBRC 16581 / SB1003).